The primary structure comprises 317 residues: Small ribosomal subunit biogenesis GTPase RsgA (317 aa).

In terms of domain architecture, CP-type G spans 88–249 (DQYKSKLFAA…LIDSPGFQEF (162 aa)). GTP-binding positions include 136 to 139 (NKID) and 190 to 198 (GQSGMGKST). Zn(2+)-binding residues include Cys-273, Cys-278, His-280, and Cys-286.

This sequence belongs to the TRAFAC class YlqF/YawG GTPase family. RsgA subfamily. As to quaternary structure, monomer. Associates with 30S ribosomal subunit, binds 16S rRNA. Zn(2+) serves as cofactor.

The protein resides in the cytoplasm. In terms of biological role, one of several proteins that assist in the late maturation steps of the functional core of the 30S ribosomal subunit. Helps release RbfA from mature subunits. May play a role in the assembly of ribosomal proteins into the subunit. Circularly permuted GTPase that catalyzes slow GTP hydrolysis, GTPase activity is stimulated by the 30S ribosomal subunit. This chain is Small ribosomal subunit biogenesis GTPase RsgA, found in Paraburkholderia phymatum (strain DSM 17167 / CIP 108236 / LMG 21445 / STM815) (Burkholderia phymatum).